The sequence spans 570 residues: E3 ubiquitin-protein ligase ZFP91 (570 aa).

The span at 1–12 shows a compositional bias: basic and acidic residues; that stretch reads MPGETEEPRPPE. The tract at residues 1–306 is disordered; the sequence is MPGETEEPRP…PRLPKRRKKP (306 aa). Low complexity-rich tracts occupy residues 31–43 and 59–68; these read QRPP…APAG and AAAAAAAAAV. Residues 69 to 82 show a composition bias toward basic residues; the sequence is SRRRKAEYPRRRRS. Serine 83 and serine 103 each carry phosphoserine. Polar residues predominate over residues 94–104; the sequence is QQPQAAKSPSP. Residues 119–128 are compositionally biased toward basic and acidic residues; it reads VTTDKDPKEE. Over residues 207–223 the composition is skewed to acidic residues; that stretch reads SEEEEEEEEEMLISEEE. Composition is skewed to basic and acidic residues over residues 224 to 245 and 252 to 269; these read IPFK…ETPK and KVKE…VEVE. Acidic residues predominate over residues 270–282; it reads VKEEENEIREDEE. C2H2-type zinc fingers lie at residues 311–336, 342–366, 372–394, 400–422, and 430–453; these read VRCE…KYQH, YVCP…AKHH, YICE…RMIH, LQCE…MKKH, and FSCN…AKSH. Residues 338 to 368 form an interaction with MAP3K14/NIK region; it reads LKKKYVCPHPSCGRLFRLQKQLLRHAKHHTD.

This sequence belongs to the krueppel C2H2-type zinc-finger protein family. Interacts with MAP3K14/NIK. Expressed ubiquitously, particularly at high level in testis. Isoform 2 is testis specific.

Its subcellular location is the nucleus. It carries out the reaction S-ubiquitinyl-[E2 ubiquitin-conjugating enzyme]-L-cysteine + [acceptor protein]-L-lysine = [E2 ubiquitin-conjugating enzyme]-L-cysteine + N(6)-ubiquitinyl-[acceptor protein]-L-lysine.. Its pathway is protein modification; protein ubiquitination. Its function is as follows. Atypical E3 ubiquitin-protein ligase that mediates 'Lys-63'-linked ubiquitination of MAP3K14/NIK, leading to stabilize and activate MAP3K14/NIK. It thereby acts as an activator of the non-canonical NF-kappa-B2/NFKB2 pathway. May also play an important role in cell proliferation and/or anti-apoptosis. The protein is E3 ubiquitin-protein ligase ZFP91 (ZFP91) of Homo sapiens (Human).